The following is a 271-amino-acid chain: GATA transcription factor 19 (271 aa).

A disordered region spans residues 1-23 (MAAEPPADGRDPPADDGAAGDGA). The Tify domain occupies 33–68 (LSAASEQLTLVYQGEVYVFDPVPPQKVQAVLLVLGG). Positions 95–137 (RIASLMRFREKRKERCFDKKIRYSVRKEVAQKMKRRKGQFAGR) constitute a CCT domain. The GATA-type zinc finger occupies 166-193 (CQNCGISSRLTPAMRRGPAGPRSLCNAC). Positions 238–271 (NQTTMKTDTEMVPEQEQKADVLPPTKEEDSMATS) are disordered. Residues 252–271 (QEQKADVLPPTKEEDSMATS) are compositionally biased toward basic and acidic residues.

It belongs to the type IV zinc-finger family. Class C subfamily.

The protein resides in the nucleus. Its function is as follows. Transcriptional activator that specifically binds 5'-GATA-3' or 5'-GAT-3' motifs within gene promoters. This Oryza sativa subsp. indica (Rice) protein is GATA transcription factor 19.